We begin with the raw amino-acid sequence, 483 residues long: Glycogen synthase kinase-3 alpha (483 aa).

The span at 1-15 shows a compositional bias: gly residues; the sequence is MSGGGPSGGGPGGSG. The tract at residues 1-96 is disordered; the sequence is MSGGGPSGGG…PPPGVKLGRD (96 aa). An N-acetylserine modification is found at Ser2. The residue at position 2 (Ser2) is a Phosphoserine. At Ser21 the chain carries Phosphoserine; by PKB/AKT1. The span at 25–82 shows a compositional bias: gly residues; sequence PGGGGGGGGGGPGGSASGPGGTGGGKASVGAMGGGVGASSSGGGPGGSGGGGSGGPGA. A phosphoserine mark is found at Ser72, Ser77, and Ser97. Positions 119-403 constitute a Protein kinase domain; that stretch reads YTDIKVIGNG…PLEACAHSFF (285 aa). ATP-binding positions include 125–133 and Lys148; that span reads IGNGSFGVV. The active-site Proton acceptor is Asp244. Position 279 is a phosphotyrosine (Tyr279). The disordered stretch occupies residues 449-483; sequence AGTTTLTPSSQALTETPTSSDWQSTDATPTLTNSS.

Belongs to the protein kinase superfamily. CMGC Ser/Thr protein kinase family. GSK-3 subfamily. In terms of assembly, monomer. Interacts with ARRB2. Interacts with AXIN1 and CTNNB1/beta-catenin. Interacts with CTNND2. Interacts with LMBR1L. Interacts with DDX3X. Interacts with TNFRSF10B. Interacts with RICTOR; the interaction results in phosphorylation of RICTOR at 'Thr-1695' by GSK3A which facilitates FBXW7-mediated ubiquitination and subsequent degradation of RICTOR. As to quaternary structure, (Microbial infection) Interacts with M.tuberculosis PtpA. In terms of processing, phosphorylated by AKT1 at Ser-21: upon insulin-mediated signaling, the activated PKB/AKT1 protein kinase phosphorylates and deactivates GSK3A, resulting in the dephosphorylation and activation of GYS1. Activated by phosphorylation at Tyr-279. (Microbial infection) Dephosphorylated at Tyr-279 by M.tuberculosis PtpA, which leads to prevention of apoptosis during early stages of microbial infection.

The catalysed reaction is L-seryl-[tau protein] + ATP = O-phospho-L-seryl-[tau protein] + ADP + H(+). The enzyme catalyses L-threonyl-[tau protein] + ATP = O-phospho-L-threonyl-[tau protein] + ADP + H(+). It carries out the reaction L-seryl-[protein] + ATP = O-phospho-L-seryl-[protein] + ADP + H(+). It catalyses the reaction L-threonyl-[protein] + ATP = O-phospho-L-threonyl-[protein] + ADP + H(+). Activated by phosphorylation at Tyr-279. In response to insulin, inhibited by phosphorylation at Ser-21 by PKB/AKT1; phosphorylation at this site causes a conformational change, preventing access of substrates to the active site. Inhibited by lithium. Functionally, constitutively active protein kinase that acts as a negative regulator in the hormonal control of glucose homeostasis, Wnt signaling and regulation of transcription factors and microtubules, by phosphorylating and inactivating glycogen synthase (GYS1 or GYS2), CTNNB1/beta-catenin, APC and AXIN1. Requires primed phosphorylation of the majority of its substrates. Contributes to insulin regulation of glycogen synthesis by phosphorylating and inhibiting GYS1 activity and hence glycogen synthesis. Regulates glycogen metabolism in liver, but not in muscle. May also mediate the development of insulin resistance by regulating activation of transcription factors. In Wnt signaling, regulates the level and transcriptional activity of nuclear CTNNB1/beta-catenin. Facilitates amyloid precursor protein (APP) processing and the generation of APP-derived amyloid plaques found in Alzheimer disease. May be involved in the regulation of replication in pancreatic beta-cells. Is necessary for the establishment of neuronal polarity and axon outgrowth. Through phosphorylation of the anti-apoptotic protein MCL1, may control cell apoptosis in response to growth factors deprivation. Acts as a regulator of autophagy by mediating phosphorylation of KAT5/TIP60 under starvation conditions which activates KAT5/TIP60 acetyltransferase activity and promotes acetylation of key autophagy regulators, such as ULK1 and RUBCNL/Pacer. Negatively regulates extrinsic apoptotic signaling pathway via death domain receptors. Promotes the formation of an anti-apoptotic complex, made of DDX3X, BRIC2 and GSK3B, at death receptors, including TNFRSF10B. The anti-apoptotic function is most effective with weak apoptotic signals and can be overcome by stronger stimulation. Phosphorylates mTORC2 complex component RICTOR at 'Thr-1695' which facilitates FBXW7-mediated ubiquitination and subsequent degradation of RICTOR. The chain is Glycogen synthase kinase-3 alpha (GSK3A) from Homo sapiens (Human).